The primary structure comprises 149 residues: MNKGQRHIKIREIIANKEIETQDELVDILRNEGFNVTQATVSRDIKELHLVKVPLHDGRYKYSLPADQRFNPLQKLKRNLVDSFVKLDTAGHMLVLKTLPGNAHSLGALIDHLEWDEIIGTICGDDTCLIICRTPEDTGVVSDRFLNML.

It belongs to the ArgR family.

The protein localises to the cytoplasm. It participates in amino-acid biosynthesis; L-arginine biosynthesis [regulation]. Its function is as follows. Regulates arginine biosynthesis genes. The chain is Arginine repressor from Bacillus cereus (strain ATCC 10987 / NRS 248).